Consider the following 406-residue polypeptide: Tryptophan 2,3-dioxygenase (406 aa).

Residues 72–76 and arginine 144 contribute to the substrate site; that span reads FIVTH. Histidine 328 lines the heme pocket. Threonine 342 contacts substrate.

This sequence belongs to the tryptophan 2,3-dioxygenase family. In terms of assembly, homotetramer. Dimer of dimers. It depends on heme as a cofactor.

It carries out the reaction L-tryptophan + O2 = N-formyl-L-kynurenine. It functions in the pathway amino-acid degradation; L-tryptophan degradation via kynurenine pathway; L-kynurenine from L-tryptophan: step 1/2. Functionally, heme-dependent dioxygenase that catalyzes the oxidative cleavage of the L-tryptophan (L-Trp) pyrrole ring and converts L-tryptophan to N-formyl-L-kynurenine. Catalyzes the oxidative cleavage of the indole moiety. The sequence is that of Tryptophan 2,3-dioxygenase from Xenopus tropicalis (Western clawed frog).